The primary structure comprises 190 residues: Peptide deformylase (190 aa).

Positions 106 and 148 each coordinate Fe cation. Residue glutamate 149 is part of the active site. Histidine 152 is a binding site for Fe cation.

The protein belongs to the polypeptide deformylase family. The cofactor is Fe(2+).

The catalysed reaction is N-terminal N-formyl-L-methionyl-[peptide] + H2O = N-terminal L-methionyl-[peptide] + formate. In terms of biological role, removes the formyl group from the N-terminal Met of newly synthesized proteins. Requires at least a dipeptide for an efficient rate of reaction. N-terminal L-methionine is a prerequisite for activity but the enzyme has broad specificity at other positions. This is Peptide deformylase from Methylacidiphilum infernorum (isolate V4) (Methylokorus infernorum (strain V4)).